A 127-amino-acid polypeptide reads, in one-letter code: GPVGTGDSKCPLMVKVLDAVRGSPAVDVSVHVFKKAADETWEPFASGKTSKTGELHGLTTSEKFVEGVYKVELDTKSYWKALGISPFHEYAEVVFTANDSGHRSYTIAALLSPFSYSTTAVVSNPQE.

Residue C10 is modified to Sulfocysteine. K15 serves as a coordination point for L-thyroxine. Position 42 is a 4-carboxyglutamate (E42). Residue E54 coordinates L-thyroxine. A glycan (N-linked (GlcNAc...) asparagine) is linked at N98. S117 is an L-thyroxine binding site.

This sequence belongs to the transthyretin family. Homotetramer. Dimer of dimers. In the homotetramer, subunits assemble around a central channel that can accommodate two ligand molecules. Interacts with RBP4. Post-translationally, sulfonation of the reactive cysteine Cys-10 enhances the stability of the native conformation of TTR, avoiding misassembly of the protein leading to amyloid formation. In terms of tissue distribution, detected in serum (at protein level).

Its subcellular location is the secreted. In terms of biological role, thyroid hormone-binding protein. Probably transports thyroxine from the bloodstream to the brain. The sequence is that of Transthyretin (TTR) from Oryctolagus cuniculus (Rabbit).